Reading from the N-terminus, the 378-residue chain is H repeat-associated putative transposase YhhI (378 aa).

It belongs to the transposase 11 family.

This Escherichia coli (strain K12) protein is H repeat-associated putative transposase YhhI (yhhI).